The following is a 375-amino-acid chain: Amylovoran biosynthesis protein AmsC (375 aa).

The next 9 membrane-spanning stretches (helical) occupy residues 2–22 (AIYW…LAMI), 31–51 (KILI…FAGI), 93–113 (MVLA…LLFI), 162–182 (IAFI…FIVL), 208–228 (LPLV…KKLF), 256–276 (VFGL…LYYF), 287–307 (VYIL…FSDF), 309–329 (IFGG…FAFL), and 337–357 (LLNF…NTIL).

The protein localises to the cell membrane. Its pathway is glycan metabolism; exopolysaccharide biosynthesis. In terms of biological role, involved in the biosynthesis of amylovoran which functions as a virulence factor. The chain is Amylovoran biosynthesis protein AmsC (amsC) from Erwinia amylovora (Fire blight bacteria).